Consider the following 876-residue polypeptide: Leucine--tRNA ligase (876 aa).

The 'HIGH' region signature appears at proline 42 to histidine 52. The 'KMSKS' region motif lies at lysine 634–serine 638. Lysine 637 is a binding site for ATP.

The protein belongs to the class-I aminoacyl-tRNA synthetase family.

Its subcellular location is the cytoplasm. The catalysed reaction is tRNA(Leu) + L-leucine + ATP = L-leucyl-tRNA(Leu) + AMP + diphosphate. The protein is Leucine--tRNA ligase of Neisseria gonorrhoeae (strain NCCP11945).